A 407-amino-acid chain; its full sequence is Protein ESC2 (407 aa).

Residues 19–130 (SPLHDEADEF…TDEQQPESEA (112 aa)) form a disordered region. A compositionally biased stretch (basic and acidic residues) spans 47 to 60 (RAGESKALRDRNKE). Positions 84–111 (RRGASESSRSSSLGSSSPSDSSSGRSLS) are enriched in low complexity. SUMO-like region repeat units follow at residues 129–253 (EANR…ATDI) and 334–407 (LLKI…VVVK).

In terms of assembly, component of a cullin-RING ligase (CRL)-like complex composed of at least the cullin RTT101, a linker protein MMS1, and the potential substrate receptor ESC2.

The protein localises to the cytoplasm. It localises to the nucleus. Functionally, may be a substrate targeting component of a cullin-RING-based E3 ubiquitin-protein ligase complex RTT101(MMS1-ESC2). Involved in HMR and telomere silencing via the recruitment or stabilizing of the SIR (silent information regulators) complex. This Eremothecium gossypii (strain ATCC 10895 / CBS 109.51 / FGSC 9923 / NRRL Y-1056) (Yeast) protein is Protein ESC2 (ESC2).